We begin with the raw amino-acid sequence, 153 residues long: Small ribosomal subunit protein uS17 (153 aa).

The protein belongs to the universal ribosomal protein uS17 family.

The sequence is that of Small ribosomal subunit protein uS17 (RpS11) from Anopheles gambiae (African malaria mosquito).